Reading from the N-terminus, the 126-residue chain is MIFGTGIDIVDITRFDRLVEEGNVRLFERLFTPHEMEYCAGKARSSQHYALRFAAKEAFLKACGLGLREGMTWHDVEVVNDTLGKPELKLHGKALKLATDLSLSRTFVSLSHDGAYAVALVVLERP.

Mg(2+)-binding residues include Asp-8 and Glu-57.

The protein belongs to the P-Pant transferase superfamily. AcpS family. Mg(2+) is required as a cofactor.

It is found in the cytoplasm. It catalyses the reaction apo-[ACP] + CoA = holo-[ACP] + adenosine 3',5'-bisphosphate + H(+). Its function is as follows. Transfers the 4'-phosphopantetheine moiety from coenzyme A to a Ser of acyl-carrier-protein. The chain is Holo-[acyl-carrier-protein] synthase from Geobacter sulfurreducens (strain ATCC 51573 / DSM 12127 / PCA).